A 468-amino-acid chain; its full sequence is Uronate isomerase (468 aa).

This sequence belongs to the metallo-dependent hydrolases superfamily. Uronate isomerase family.

It carries out the reaction D-glucuronate = D-fructuronate. The enzyme catalyses aldehydo-D-galacturonate = keto-D-tagaturonate. The protein operates within carbohydrate metabolism; pentose and glucuronate interconversion. The protein is Uronate isomerase of Phocaeicola vulgatus (strain ATCC 8482 / DSM 1447 / JCM 5826 / CCUG 4940 / NBRC 14291 / NCTC 11154) (Bacteroides vulgatus).